The sequence spans 193 residues: uncharacterized protein (193 aa).

This is an uncharacterized protein from Mycoplasma pneumoniae (strain ATCC 29342 / M129 / Subtype 1) (Mycoplasmoides pneumoniae).